We begin with the raw amino-acid sequence, 406 residues long: Succinylornithine transaminase (406 aa).

At lysine 252 the chain carries N6-(pyridoxal phosphate)lysine.

This sequence belongs to the class-III pyridoxal-phosphate-dependent aminotransferase family. AstC subfamily. The cofactor is pyridoxal 5'-phosphate.

The catalysed reaction is N(2)-succinyl-L-ornithine + 2-oxoglutarate = N-succinyl-L-glutamate 5-semialdehyde + L-glutamate. It functions in the pathway amino-acid degradation; L-arginine degradation via AST pathway; L-glutamate and succinate from L-arginine: step 3/5. In terms of biological role, catalyzes the transamination of N(2)-succinylornithine and alpha-ketoglutarate into N(2)-succinylglutamate semialdehyde and glutamate. Can also act as an acetylornithine aminotransferase. The protein is Succinylornithine transaminase of Escherichia coli O139:H28 (strain E24377A / ETEC).